Reading from the N-terminus, the 126-residue chain is C-type natriuretic peptide (126 aa).

The first 23 residues, 1 to 23 (MHLSQLLACALLLSLLSLRPSEA), serve as a signal peptide directing secretion. The segment at 20–71 (PSEAKPGAPPKVPRTPPGEEVAEPQAAGGGQKKGDKTPGGGGANLKDDRSRL) is disordered. A propeptide spanning residues 24 to 73 (KPGAPPKVPRTPPGEEVAEPQAAGGGQKKGDKTPGGGGANLKDDRSRLLR) is cleaved from the precursor. The span at 26-35 (GAPPKVPRTP) shows a compositional bias: pro residues. Over residues 46–62 (AGGGQKKGDKTPGGGGA) the composition is skewed to gly residues. The cysteines at positions 110 and 126 are disulfide-linked.

This sequence belongs to the natriuretic peptide family. Degraded by IDE (in vitro).

Its subcellular location is the secreted. Functionally, hormone which plays a role in endochondral ossification through regulation of cartilaginous growth plate chondrocytes proliferation and differentiation. May also be vasoactive and natriuretic. Acts by specifically binding and stimulating NPR2 to produce cGMP. Binds the clearance receptor NPR3. The sequence is that of C-type natriuretic peptide (NPPC) from Ovis aries (Sheep).